The sequence spans 429 residues: Choline kinase A2 (429 aa).

ATP contacts are provided by residues 82–88 (KGGMSNM), arginine 111, 152–158 (EYIPSRP), and glutamine 257. A substrate-binding site is contributed by 84–86 (GMS). Glutamate 258 serves as a coordination point for Ca(2+). ATP is bound at residue aspartate 301. The Ca(2+) site is built by glutamate 320 and isoleucine 323.

The protein belongs to the choline/ethanolamine kinase family. As to quaternary structure, homodimer. A small proportion exists as higher oligomers. Requires Mg(2+) as cofactor.

It carries out the reaction choline + ATP = phosphocholine + ADP + H(+). The catalysed reaction is ethanolamine + ATP = phosphoethanolamine + ADP + H(+). It participates in phospholipid metabolism; phosphatidylcholine biosynthesis; phosphocholine from choline: step 1/1. The protein operates within phospholipid metabolism; phosphatidylethanolamine biosynthesis; phosphatidylethanolamine from ethanolamine: step 1/3. Inhibited by Ca(2+). Mild inhibition by high levels of Mg(2+)(&gt;10 mM). In terms of biological role, catalyzes the first step in phosphatidylcholine biosynthesis. May contribute to phosphatidylethanolamine biosynthesis. Phosphorylates choline and ethanolamine but the activity is much higher with choline. The sequence is that of Choline kinase A2 from Caenorhabditis elegans.